The sequence spans 710 residues: Protein phosphatase 1 regulatory subunit 37 (710 aa).

The segment covering 1-12 (MEIPPQEAPPGP) has biased composition (pro residues). Residues 1-46 (MEIPPQEAPPGPGADADADAEAEEAPAEAGSSSGASPPTDGRLKAA) form a disordered region. A compositionally biased stretch (acidic residues) spans 16–26 (ADADAEAEEAP). Residues 27–38 (AEAGSSSGASPP) are compositionally biased toward low complexity. Phosphoserine occurs at positions 54 and 60. LRR repeat units lie at residues 224-244 (SLAVLHLENASLSGRPLMLLA), 252-273 (NLQELYLADNKLNGLQDSAQLG), 281-301 (SLQILDLRNNHVLDSGLAYIC), 310-330 (GLVTLVLWNNQLTHTGMAFLG), and 338-358 (SLETLNLGHNPIGNEGVRNLK). Residues 487–677 (PLEESGDLPA…APPGLEAKGS (191 aa)) form a disordered region. Over residues 512–531 (SDSDSDSDREEQEEEEEDQS) the composition is skewed to acidic residues. Over residues 543-565 (SSSAPCPALLPSTDSLGPGDKSP) the composition is skewed to low complexity. A Phosphoserine modification is found at serine 581. The segment covering 603–624 (PPVPPTSVSSPPPSPPSPPASP) has biased composition (pro residues). A compositionally biased stretch (polar residues) spans 637–649 (SEAQPQTEPSQAG). Over residues 656-676 (LKPEFALALAPEAPPGLEAKG) the composition is skewed to low complexity.

This sequence belongs to the PPP1R37 family. In terms of assembly, interacts with PPP1CA.

Inhibits phosphatase activity of protein phosphatase 1 (PP1) complexes. This chain is Protein phosphatase 1 regulatory subunit 37 (Ppp1r37), found in Rattus norvegicus (Rat).